Here is a 139-residue protein sequence, read N- to C-terminus: Lysozyme (139 aa).

Residues M1–A19 form the signal peptide. The region spanning K20–C139 is the C-type lysozyme domain. Intrachain disulfides connect C25–C139, C46–C129, C81–C95, and C91–C109. Active-site residues include E51 and D69.

Belongs to the glycosyl hydrolase 22 family.

The catalysed reaction is Hydrolysis of (1-&gt;4)-beta-linkages between N-acetylmuramic acid and N-acetyl-D-glucosamine residues in a peptidoglycan and between N-acetyl-D-glucosamine residues in chitodextrins.. Its function is as follows. Lysozymes have primarily a bacteriolytic function; those in tissues and body fluids are associated with the monocyte-macrophage system and enhance the activity of immunoagents. This chain is Lysozyme, found in Hyalophora cecropia (Cecropia moth).